Here is a 96-residue protein sequence, read N- to C-terminus: uncharacterized protein (96 aa).

Its subcellular location is the mitochondrion. This is an uncharacterized protein from Saccharomyces cerevisiae (strain ATCC 204508 / S288c) (Baker's yeast).